The primary structure comprises 338 residues: Ketol-acid reductoisomerase (NADP(+)) (338 aa).

Residues 3–183 (IDVFYDDDAD…GGARAGVIPT (181 aa)) enclose the KARI N-terminal Rossmann domain. NADP(+) contacts are provided by residues 26–29 (YGSQ), Arg-49, Ser-52, Ser-54, and 84–87 (DTSQ). The active site involves His-109. Residue Gly-135 participates in NADP(+) binding. The 146-residue stretch at 184–329 (TFEAETVTDL…AKLRDLMSWV (146 aa)) folds into the KARI C-terminal knotted domain. 4 residues coordinate Mg(2+): Asp-192, Glu-196, Glu-228, and Glu-232. Ser-253 contacts substrate.

The protein belongs to the ketol-acid reductoisomerase family. Mg(2+) is required as a cofactor.

It carries out the reaction (2R)-2,3-dihydroxy-3-methylbutanoate + NADP(+) = (2S)-2-acetolactate + NADPH + H(+). It catalyses the reaction (2R,3R)-2,3-dihydroxy-3-methylpentanoate + NADP(+) = (S)-2-ethyl-2-hydroxy-3-oxobutanoate + NADPH + H(+). It participates in amino-acid biosynthesis; L-isoleucine biosynthesis; L-isoleucine from 2-oxobutanoate: step 2/4. Its pathway is amino-acid biosynthesis; L-valine biosynthesis; L-valine from pyruvate: step 2/4. Its function is as follows. Involved in the biosynthesis of branched-chain amino acids (BCAA). Catalyzes an alkyl-migration followed by a ketol-acid reduction of (S)-2-acetolactate (S2AL) to yield (R)-2,3-dihydroxy-isovalerate. In the isomerase reaction, S2AL is rearranged via a Mg-dependent methyl migration to produce 3-hydroxy-3-methyl-2-ketobutyrate (HMKB). In the reductase reaction, this 2-ketoacid undergoes a metal-dependent reduction by NADPH to yield (R)-2,3-dihydroxy-isovalerate. The protein is Ketol-acid reductoisomerase (NADP(+)) of Corynebacterium jeikeium (strain K411).